Consider the following 156-residue polypeptide: RNA polymerase sigma factor SigS (156 aa).

The Polymerase core binding motif lies at Glu-29–Ile-44. The H-T-H motif DNA-binding region spans Gln-126–Met-145.

The protein belongs to the sigma-70 factor family.

Sigma factors are initiation factors that promote the attachment of RNA polymerase to specific initiation sites and are then released. Sigma-S contributes to the protection against external stress, thus playing a role in cellular fitness and survival. This chain is RNA polymerase sigma factor SigS (sigS), found in Staphylococcus aureus (strain Mu50 / ATCC 700699).